A 332-amino-acid polypeptide reads, in one-letter code: DnAJ-like protein slr0093 (332 aa).

Residues phenylalanine 6–tyrosine 75 enclose the J domain.

This chain is DnAJ-like protein slr0093, found in Synechocystis sp. (strain ATCC 27184 / PCC 6803 / Kazusa).